Consider the following 284-residue polypeptide: Tropomyosin (284 aa).

Residues 1–284 adopt a coiled-coil conformation; sequence MDGIKKKMIA…DQTFAELTGY (284 aa). Basic and acidic residues-rich tracts occupy residues 29–42 and 111–136; these read LKQK…KETE and AKFD…RSIA. Disordered regions lie at residues 29-49 and 111-149; these read LKQK…LNNR and AKFD…DQQK.

This sequence belongs to the tropomyosin family.

Its function is as follows. Tropomyosin, in association with the troponin complex, plays a central role in the calcium dependent regulation of muscle contraction. This is Tropomyosin from Clonorchis sinensis (Chinese liver fluke).